A 488-amino-acid polypeptide reads, in one-letter code: UDP-N-acetylmuramate--L-alanine ligase (488 aa).

Gly126–Thr132 serves as a coordination point for ATP.

Belongs to the MurCDEF family.

It is found in the cytoplasm. It catalyses the reaction UDP-N-acetyl-alpha-D-muramate + L-alanine + ATP = UDP-N-acetyl-alpha-D-muramoyl-L-alanine + ADP + phosphate + H(+). It participates in cell wall biogenesis; peptidoglycan biosynthesis. Functionally, cell wall formation. The polypeptide is UDP-N-acetylmuramate--L-alanine ligase (Cronobacter sakazakii (strain ATCC BAA-894) (Enterobacter sakazakii)).